The sequence spans 114 residues: UPF0342 protein OEOE_0901 (114 aa).

Belongs to the UPF0342 family.

The chain is UPF0342 protein OEOE_0901 from Oenococcus oeni (strain ATCC BAA-331 / PSU-1).